The primary structure comprises 282 residues: MATYLIGDVHGCYDELIALLQQVEFMPDTDTLWLTGDLVARGPGSLDVLRYVKSLGNSVRLVLGNHDLHLLAVFAGISRNKPKDRLTPLLEAPDADELLNWLRRQPLLQVDEEKKLVMAHAGITPQWDLQTAKECARDVEAVLSSDSYPFFLDAMYGDMPNNWSPELSGLARLRFITNAFTRMRYCFPNGQLDMYSKASPENAPAPLKPWFAIPGPVSEAYSIAFGHWASLEGKGTPEGIYALDTGCCWGGELTCLRWEDKQYFVQPSNRQMDMGEGEAVNA.

Belongs to the Ap4A hydrolase family.

The catalysed reaction is P(1),P(4)-bis(5'-adenosyl) tetraphosphate + H2O = 2 ADP + 2 H(+). Hydrolyzes diadenosine 5',5'''-P1,P4-tetraphosphate to yield ADP. This chain is Bis(5'-nucleosyl)-tetraphosphatase, symmetrical, found in Salmonella paratyphi A (strain ATCC 9150 / SARB42).